The following is a 195-amino-acid chain: MIRKIKPQIRVIGFDDGTFSFKSKIKRDKTILVGVVMKGSQDVVGVVTRWIEVDGRDATEKMIEAIHNSRFKDLRIIMLKGITYAGFNVVDVEELSRETRMPVIIVIRKKPDLQAMEKALKKHFSDAEEKISLLHKAGKIKELIPGKLYYQAIGVSYDQAEEIIRLTQKSSLIPEPLRLAHMIASAVMSGESKKE.

It belongs to the UPF0215 family.

This is UPF0215 protein TSIB_1161 from Thermococcus sibiricus (strain DSM 12597 / MM 739).